We begin with the raw amino-acid sequence, 407 residues long: Probable tRNA sulfurtransferase (407 aa).

Positions 61 to 165 (NEITYRLSKI…LDAIYMYEEV (105 aa)) constitute a THUMP domain. ATP contacts are provided by residues 183-184 (ML), 208-209 (HF), Arg-265, Gly-287, and Gln-296.

This sequence belongs to the ThiI family.

The protein localises to the cytoplasm. It carries out the reaction [ThiI sulfur-carrier protein]-S-sulfanyl-L-cysteine + a uridine in tRNA + 2 reduced [2Fe-2S]-[ferredoxin] + ATP + H(+) = [ThiI sulfur-carrier protein]-L-cysteine + a 4-thiouridine in tRNA + 2 oxidized [2Fe-2S]-[ferredoxin] + AMP + diphosphate. The catalysed reaction is [ThiS sulfur-carrier protein]-C-terminal Gly-Gly-AMP + S-sulfanyl-L-cysteinyl-[cysteine desulfurase] + AH2 = [ThiS sulfur-carrier protein]-C-terminal-Gly-aminoethanethioate + L-cysteinyl-[cysteine desulfurase] + A + AMP + 2 H(+). The protein operates within cofactor biosynthesis; thiamine diphosphate biosynthesis. Its function is as follows. Catalyzes the ATP-dependent transfer of a sulfur to tRNA to produce 4-thiouridine in position 8 of tRNAs, which functions as a near-UV photosensor. Also catalyzes the transfer of sulfur to the sulfur carrier protein ThiS, forming ThiS-thiocarboxylate. This is a step in the synthesis of thiazole, in the thiamine biosynthesis pathway. The sulfur is donated as persulfide by IscS. The protein is Probable tRNA sulfurtransferase of Staphylococcus aureus (strain NCTC 8325 / PS 47).